Here is a 737-residue protein sequence, read N- to C-terminus: Polyribonucleotide nucleotidyltransferase (737 aa).

The Mg(2+) site is built by aspartate 489 and aspartate 495. Positions proline 556–isoleucine 615 constitute a KH domain. The S1 motif domain occupies aspartate 625 to lysine 693. The segment at serine 691 to glutamate 737 is disordered. A compositionally biased stretch (basic and acidic residues) spans proline 700–proline 714. A compositionally biased stretch (basic residues) spans histidine 715–lysine 724. The segment covering proline 725–glutamate 737 has biased composition (basic and acidic residues).

The protein belongs to the polyribonucleotide nucleotidyltransferase family. The cofactor is Mg(2+).

Its subcellular location is the cytoplasm. The enzyme catalyses RNA(n+1) + phosphate = RNA(n) + a ribonucleoside 5'-diphosphate. Its function is as follows. Involved in mRNA degradation. Catalyzes the phosphorolysis of single-stranded polyribonucleotides processively in the 3'- to 5'-direction. This chain is Polyribonucleotide nucleotidyltransferase, found in Streptococcus pneumoniae (strain 70585).